The chain runs to 644 residues: Arabinosyltransferase XEG113 (644 aa).

Topologically, residues 1–17 (MVEGWRNGFRDATNSKP) are cytoplasmic. A helical; Signal-anchor for type II membrane protein transmembrane segment spans residues 18–38 (LFVTIYATVIIGVLVSSFYVF). The Lumenal segment spans residues 39–644 (SAIYSPTNGS…QTPEEDHPPL (606 aa)). N-linked (GlcNAc...) asparagine glycans are attached at residues N46 and N70. A DXD motif motif is present at residues 226-228 (DTD). Residues N446 and N542 are each glycosylated (N-linked (GlcNAc...) asparagine).

The protein belongs to the glycosyltransferase 77 family.

It localises to the golgi apparatus membrane. Functionally, plays a role in the arabinosylation of cell wall components. Involved in the arabinosylation of extensin proteins in root hair cells. Extensins are structural glycoproteins present in cell walls and its arabinosylation is important for cell elongation, root hair cell development, lateral root development and root hair tip growth. The protein is Arabinosyltransferase XEG113 of Arabidopsis thaliana (Mouse-ear cress).